A 366-amino-acid chain; its full sequence is tRNA(Met) cytidine acetate ligase (366 aa).

Residues Ile-7–Leu-20, Gly-96, Asn-152, and Arg-175 contribute to the ATP site.

Belongs to the TmcAL family.

It localises to the cytoplasm. It catalyses the reaction cytidine(34) in elongator tRNA(Met) + acetate + ATP = N(4)-acetylcytidine(34) in elongator tRNA(Met) + AMP + diphosphate. Functionally, catalyzes the formation of N(4)-acetylcytidine (ac(4)C) at the wobble position of elongator tRNA(Met), using acetate and ATP as substrates. First activates an acetate ion to form acetyladenylate (Ac-AMP) and then transfers the acetyl group to tRNA to form ac(4)C34. This chain is tRNA(Met) cytidine acetate ligase, found in Streptococcus equi subsp. zooepidemicus (strain MGCS10565).